The sequence spans 218 residues: Ribose-5-phosphate isomerase A (218 aa).

Residues 28 to 31 (TGST), 81 to 84 (DGAD), and 94 to 97 (KGGG) each bind substrate. Glu103 functions as the Proton acceptor in the catalytic mechanism. Lys121 is a substrate binding site.

Belongs to the ribose 5-phosphate isomerase family. In terms of assembly, homodimer.

It carries out the reaction aldehydo-D-ribose 5-phosphate = D-ribulose 5-phosphate. It participates in carbohydrate degradation; pentose phosphate pathway; D-ribose 5-phosphate from D-ribulose 5-phosphate (non-oxidative stage): step 1/1. In terms of biological role, catalyzes the reversible conversion of ribose-5-phosphate to ribulose 5-phosphate. The protein is Ribose-5-phosphate isomerase A of Vibrio vulnificus (strain CMCP6).